We begin with the raw amino-acid sequence, 490 residues long: Glutamate--tRNA ligase 1 (490 aa).

The 'HIGH' region signature appears at 27–37; that stretch reads PSPTGYLHIGG. The 'KMSKS' region motif lies at 254-258; sequence KLSKR. Lys257 is a binding site for ATP.

It belongs to the class-I aminoacyl-tRNA synthetase family. Glutamate--tRNA ligase type 1 subfamily. Monomer.

The protein localises to the cytoplasm. It carries out the reaction tRNA(Glu) + L-glutamate + ATP = L-glutamyl-tRNA(Glu) + AMP + diphosphate. Its function is as follows. Catalyzes the attachment of glutamate to tRNA(Glu) in a two-step reaction: glutamate is first activated by ATP to form Glu-AMP and then transferred to the acceptor end of tRNA(Glu). This chain is Glutamate--tRNA ligase 1, found in Sphingopyxis alaskensis (strain DSM 13593 / LMG 18877 / RB2256) (Sphingomonas alaskensis).